The chain runs to 151 residues: Deoxyuridine 5'-triphosphate nucleotidohydrolase (151 aa).

Residues 70–72, Asn83, 87–89, and Met97 contribute to the substrate site; these read RSG and LID.

This sequence belongs to the dUTPase family. Mg(2+) is required as a cofactor.

The catalysed reaction is dUTP + H2O = dUMP + diphosphate + H(+). The protein operates within pyrimidine metabolism; dUMP biosynthesis; dUMP from dCTP (dUTP route): step 2/2. Functionally, this enzyme is involved in nucleotide metabolism: it produces dUMP, the immediate precursor of thymidine nucleotides and it decreases the intracellular concentration of dUTP so that uracil cannot be incorporated into DNA. The sequence is that of Deoxyuridine 5'-triphosphate nucleotidohydrolase from Haemophilus influenzae (strain 86-028NP).